The primary structure comprises 33 residues: Cytochrome b6-f complex subunit 7 (33 aa).

The chain crosses the membrane as a helical span at residues Ala9–Ile29.

Belongs to the PetM family. As to quaternary structure, the 4 large subunits of the cytochrome b6-f complex are cytochrome b6, subunit IV (17 kDa polypeptide, PetD), cytochrome f and the Rieske protein, while the 4 small subunits are PetG, PetL, PetM and PetN. The complex functions as a dimer.

It is found in the plastid. The protein localises to the cyanelle thylakoid membrane. In terms of biological role, component of the cytochrome b6-f complex, which mediates electron transfer between photosystem II (PSII) and photosystem I (PSI), cyclic electron flow around PSI, and state transitions. This chain is Cytochrome b6-f complex subunit 7, found in Cyanophora paradoxa.